A 194-amino-acid polypeptide reads, in one-letter code: uncharacterized protein (194 aa).

The N-terminal stretch at 1–29 is a signal peptide; that stretch reads MKKAFLVFLSVVLVTTVFLVKQQESVAQA. The stretch at 104 to 131 forms a coiled coil; the sequence is KVDELLKKAGQIVEEKVEAAKEIAASKD. The helical transmembrane segment at 149–171 threads the bilayer; it reads YFYYVSYVAAAGALILIILAIDI.

It is found in the membrane. This is an uncharacterized protein from Bacillus subtilis (strain 168).